We begin with the raw amino-acid sequence, 204 residues long: Leucyl/phenylalanyl-tRNA--protein transferase (204 aa).

The protein belongs to the L/F-transferase family.

It localises to the cytoplasm. The enzyme catalyses N-terminal L-lysyl-[protein] + L-leucyl-tRNA(Leu) = N-terminal L-leucyl-L-lysyl-[protein] + tRNA(Leu) + H(+). It catalyses the reaction N-terminal L-arginyl-[protein] + L-leucyl-tRNA(Leu) = N-terminal L-leucyl-L-arginyl-[protein] + tRNA(Leu) + H(+). It carries out the reaction L-phenylalanyl-tRNA(Phe) + an N-terminal L-alpha-aminoacyl-[protein] = an N-terminal L-phenylalanyl-L-alpha-aminoacyl-[protein] + tRNA(Phe). Its function is as follows. Functions in the N-end rule pathway of protein degradation where it conjugates Leu, Phe and, less efficiently, Met from aminoacyl-tRNAs to the N-termini of proteins containing an N-terminal arginine or lysine. This is Leucyl/phenylalanyl-tRNA--protein transferase from Rhizobium etli (strain ATCC 51251 / DSM 11541 / JCM 21823 / NBRC 15573 / CFN 42).